A 900-amino-acid chain; its full sequence is Isoleucine--tRNA ligase (900 aa).

Residues 58–68 (PYANGDLHTGH) carry the 'HIGH' region motif. E550 is an L-isoleucyl-5'-AMP binding site. The 'KMSKS' region motif lies at 591–595 (KMSKS). An ATP-binding site is contributed by K594. Zn(2+) contacts are provided by C871, C874, C888, and C891.

This sequence belongs to the class-I aminoacyl-tRNA synthetase family. IleS type 1 subfamily. In terms of assembly, monomer. It depends on Zn(2+) as a cofactor.

It is found in the cytoplasm. The enzyme catalyses tRNA(Ile) + L-isoleucine + ATP = L-isoleucyl-tRNA(Ile) + AMP + diphosphate. Its function is as follows. Catalyzes the attachment of isoleucine to tRNA(Ile). As IleRS can inadvertently accommodate and process structurally similar amino acids such as valine, to avoid such errors it has two additional distinct tRNA(Ile)-dependent editing activities. One activity is designated as 'pretransfer' editing and involves the hydrolysis of activated Val-AMP. The other activity is designated 'posttransfer' editing and involves deacylation of mischarged Val-tRNA(Ile). The protein is Isoleucine--tRNA ligase of Malacoplasma penetrans (strain HF-2) (Mycoplasma penetrans).